We begin with the raw amino-acid sequence, 43 residues long: Mu-conotoxin-like Cal 12.2c (43 aa).

Arg-1 is a propeptide. Intrachain disulfides connect Cys-4/Cys-16, Cys-11/Cys-24, Cys-18/Cys-29, and Cys-23/Cys-35. Residue Trp-31 is modified to 6'-bromotryptophan. Position 36 is a 4-hydroxyproline (Pro-36). Position 40 is a 6'-bromotryptophan (Trp-40).

In terms of tissue distribution, expressed by the venom duct.

The protein localises to the secreted. Mu-conotoxins block voltage-gated sodium channels. This toxin reversibly blocks voltage-gated sodium channel in cephalopods, with no alteration in the voltage dependence of sodium conductance or on the kinetics of inactivation. The sequence is that of Mu-conotoxin-like Cal 12.2c from Californiconus californicus (California cone).